A 549-amino-acid chain; its full sequence is Probable protein kinase UbiB (549 aa).

A Protein kinase domain is found at 123 to 501 (DFDETPLASA…QQQAHKSNYM (379 aa)). ATP is bound by residues 129–137 (LASASISQV) and Lys152. The active-site Proton acceptor is the Asp287. 2 consecutive transmembrane segments (helical) span residues 499-516 (NYML…TLLF) and 521-540 (TLWS…FIGW).

It belongs to the ABC1 family. UbiB subfamily.

It is found in the cell inner membrane. The protein operates within cofactor biosynthesis; ubiquinone biosynthesis [regulation]. Its function is as follows. Is probably a protein kinase regulator of UbiI activity which is involved in aerobic coenzyme Q (ubiquinone) biosynthesis. The polypeptide is Probable protein kinase UbiB (Shewanella sp. (strain W3-18-1)).